The following is a 669-amino-acid chain: Coagulation factor XIII B chain (669 aa).

An N-terminal signal peptide occupies residues 1 to 21 (MMTLRHLPFILLLILSGELYA). Sushi domains are found at residues 25–89 (QCDF…PRCY), 90–149 (KKCL…SCRK), 152–211 (ETCL…QCNK), 212–270 (LMCS…ICEG), 273–330 (NRCP…KCIE), 335–392 (VACE…ECVE), 395–453 (ENCK…VCLE), 454–517 (PCTI…PMCI), 523–581 (GMCA…SCLE), and 582–648 (PCTL…PKCT). 20 disulfide bridges follow: Cys-26–Cys-77, Cys-60–Cys-88, Cys-92–Cys-136, Cys-119–Cys-147, Cys-154–Cys-198, Cys-181–Cys-209, Cys-214–Cys-256, Cys-242–Cys-268, Cys-275–Cys-317, Cys-303–Cys-328, Cys-337–Cys-379, Cys-365–Cys-390, Cys-397–Cys-440, Cys-426–Cys-451, Cys-455–Cys-506, Cys-487–Cys-516, Cys-525–Cys-568, Cys-554–Cys-579, Cys-583–Cys-637, and Cys-617–Cys-647. Asn-163 carries an N-linked (GlcNAc...) asparagine glycan. Asn-546 carries an N-linked (GlcNAc...) asparagine glycan.

Tetramer of two A chains (F13A1) and two B (F13B) chains. In terms of tissue distribution, predominantly expressed in liver and kidney.

The protein resides in the secreted. Functionally, the B chain of factor XIII is not catalytically active, but is thought to stabilize the A subunits and regulate the rate of transglutaminase formation by thrombin. This Mus musculus (Mouse) protein is Coagulation factor XIII B chain (F13b).